The primary structure comprises 115 residues: Tyrosine-protein phosphatase 23 (115 aa).

In terms of domain architecture, Tyrosine-protein phosphatase spans 1-115 (WMMIVEQKCR…EIGGDAPMVV (115 aa)). A substrate-binding site is contributed by Asp-83.

The protein belongs to the protein-tyrosine phosphatase family.

The catalysed reaction is O-phospho-L-tyrosyl-[protein] + H2O = L-tyrosyl-[protein] + phosphate. This is Tyrosine-protein phosphatase 23 (STY-23) from Styela plicata (Wrinkled sea squirt).